Consider the following 184-residue polypeptide: dCTP deaminase (184 aa).

DCTP contacts are provided by residues 107–112 (KSTYAR), 131–133 (TLE), Gln152, Tyr166, and Gln176. The active-site Proton donor/acceptor is Glu133.

The protein belongs to the dCTP deaminase family. In terms of assembly, homotrimer.

It carries out the reaction dCTP + H2O + H(+) = dUTP + NH4(+). Its pathway is pyrimidine metabolism; dUMP biosynthesis; dUMP from dCTP (dUTP route): step 1/2. Catalyzes the deamination of dCTP to dUTP. This chain is dCTP deaminase, found in Erythrobacter litoralis (strain HTCC2594).